The primary structure comprises 360 residues: Phosphoserine aminotransferase (360 aa).

Residue Arg-43 coordinates L-glutamate. Pyridoxal 5'-phosphate-binding positions include 77-78 (AS), Trp-103, Thr-152, Asp-172, and Gln-195. At Lys-196 the chain carries N6-(pyridoxal phosphate)lysine. 237 to 238 (NT) contacts pyridoxal 5'-phosphate.

This sequence belongs to the class-V pyridoxal-phosphate-dependent aminotransferase family. SerC subfamily. As to quaternary structure, homodimer. Pyridoxal 5'-phosphate serves as cofactor.

The protein resides in the cytoplasm. The enzyme catalyses O-phospho-L-serine + 2-oxoglutarate = 3-phosphooxypyruvate + L-glutamate. It carries out the reaction 4-(phosphooxy)-L-threonine + 2-oxoglutarate = (R)-3-hydroxy-2-oxo-4-phosphooxybutanoate + L-glutamate. It participates in amino-acid biosynthesis; L-serine biosynthesis; L-serine from 3-phospho-D-glycerate: step 2/3. Its pathway is cofactor biosynthesis; pyridoxine 5'-phosphate biosynthesis; pyridoxine 5'-phosphate from D-erythrose 4-phosphate: step 3/5. Its function is as follows. Catalyzes the reversible conversion of 3-phosphohydroxypyruvate to phosphoserine and of 3-hydroxy-2-oxo-4-phosphonooxybutanoate to phosphohydroxythreonine. The protein is Phosphoserine aminotransferase of Syntrophobacter fumaroxidans (strain DSM 10017 / MPOB).